The following is a 347-amino-acid chain: UDP-3-O-acylglucosamine N-acyltransferase 1 (347 aa).

The active-site Proton acceptor is the histidine 246.

The protein belongs to the transferase hexapeptide repeat family. LpxD subfamily. In terms of assembly, homotrimer.

It carries out the reaction a UDP-3-O-[(3R)-3-hydroxyacyl]-alpha-D-glucosamine + a (3R)-hydroxyacyl-[ACP] = a UDP-2-N,3-O-bis[(3R)-3-hydroxyacyl]-alpha-D-glucosamine + holo-[ACP] + H(+). The protein operates within bacterial outer membrane biogenesis; LPS lipid A biosynthesis. Catalyzes the N-acylation of UDP-3-O-acylglucosamine using 3-hydroxyacyl-ACP as the acyl donor. Is involved in the biosynthesis of lipid A, a phosphorylated glycolipid that anchors the lipopolysaccharide to the outer membrane of the cell. This is UDP-3-O-acylglucosamine N-acyltransferase 1 from Francisella tularensis subsp. tularensis (strain SCHU S4 / Schu 4).